The chain runs to 366 residues: Holliday junction branch migration complex subunit RuvB (366 aa).

Residues 3–183 (ADGLVSAAAS…FGFTAHLDFY (181 aa)) are large ATPase domain (RuvB-L). ATP is bound by residues L22, R23, G64, K67, T68, S69, 130–132 (EDF), R173, Y183, and R220. Residue T68 participates in Mg(2+) binding. A small ATPAse domain (RuvB-S) region spans residues 184-254 (APDELARVLT…VARAALRIYD (71 aa)). The head domain (RuvB-H) stretch occupies residues 257 to 366 (GLGLDRLDRA…PEDGLHPGGG (110 aa)). R312 and R317 together coordinate DNA.

This sequence belongs to the RuvB family. In terms of assembly, homohexamer. Forms an RuvA(8)-RuvB(12)-Holliday junction (HJ) complex. HJ DNA is sandwiched between 2 RuvA tetramers; dsDNA enters through RuvA and exits via RuvB. An RuvB hexamer assembles on each DNA strand where it exits the tetramer. Each RuvB hexamer is contacted by two RuvA subunits (via domain III) on 2 adjacent RuvB subunits; this complex drives branch migration. In the full resolvosome a probable DNA-RuvA(4)-RuvB(12)-RuvC(2) complex forms which resolves the HJ.

The protein localises to the cytoplasm. It carries out the reaction ATP + H2O = ADP + phosphate + H(+). In terms of biological role, the RuvA-RuvB-RuvC complex processes Holliday junction (HJ) DNA during genetic recombination and DNA repair, while the RuvA-RuvB complex plays an important role in the rescue of blocked DNA replication forks via replication fork reversal (RFR). RuvA specifically binds to HJ cruciform DNA, conferring on it an open structure. The RuvB hexamer acts as an ATP-dependent pump, pulling dsDNA into and through the RuvAB complex. RuvB forms 2 homohexamers on either side of HJ DNA bound by 1 or 2 RuvA tetramers; 4 subunits per hexamer contact DNA at a time. Coordinated motions by a converter formed by DNA-disengaged RuvB subunits stimulates ATP hydrolysis and nucleotide exchange. Immobilization of the converter enables RuvB to convert the ATP-contained energy into a lever motion, pulling 2 nucleotides of DNA out of the RuvA tetramer per ATP hydrolyzed, thus driving DNA branch migration. The RuvB motors rotate together with the DNA substrate, which together with the progressing nucleotide cycle form the mechanistic basis for DNA recombination by continuous HJ branch migration. Branch migration allows RuvC to scan DNA until it finds its consensus sequence, where it cleaves and resolves cruciform DNA. This Frankia alni (strain DSM 45986 / CECT 9034 / ACN14a) protein is Holliday junction branch migration complex subunit RuvB.